The primary structure comprises 169 residues: Putative esterase F42H10.6 (169 aa).

This sequence belongs to the thioesterase paaI family.

The protein is Putative esterase F42H10.6 of Caenorhabditis elegans.